The chain runs to 204 residues: FlaA locus 22.9 kDa protein (204 aa).

The tract at residues 115-140 (EKTAEDQKKSSEDHTEGSADSKASSE) is disordered.

In Bacillus subtilis (strain 168), this protein is FlaA locus 22.9 kDa protein (ylxF).